The primary structure comprises 253 residues: Purine nucleoside phosphorylase DR_1966 (253 aa).

3 residues coordinate Zn(2+): histidine 72, cysteine 106, and histidine 123.

Belongs to the purine nucleoside phosphorylase YfiH/LACC1 family. In terms of assembly, homodimer. Cu(2+) is required as a cofactor. Requires Zn(2+) as cofactor.

It carries out the reaction adenosine + phosphate = alpha-D-ribose 1-phosphate + adenine. It catalyses the reaction S-methyl-5'-thioadenosine + phosphate = 5-(methylsulfanyl)-alpha-D-ribose 1-phosphate + adenine. The catalysed reaction is inosine + phosphate = alpha-D-ribose 1-phosphate + hypoxanthine. The enzyme catalyses adenosine + H2O + H(+) = inosine + NH4(+). In terms of biological role, purine nucleoside enzyme that catalyzes the phosphorolysis of adenosine and inosine nucleosides, yielding D-ribose 1-phosphate and the respective free bases, adenine and hypoxanthine. Also catalyzes the phosphorolysis of S-methyl-5'-thioadenosine into adenine and S-methyl-5-thio-alpha-D-ribose 1-phosphate. Also has adenosine deaminase activity. This Deinococcus radiodurans (strain ATCC 13939 / DSM 20539 / JCM 16871 / CCUG 27074 / LMG 4051 / NBRC 15346 / NCIMB 9279 / VKM B-1422 / R1) protein is Purine nucleoside phosphorylase DR_1966.